A 278-amino-acid chain; its full sequence is Small ribosomal subunit protein uS3 (278 aa).

Positions 39 to 107 (VRDFLKKRLA…PVHVNIEEVR (69 aa)) constitute a KH type-2 domain. Positions 217 to 278 (VENENEARRG…DAAAVEKEVS (62 aa)) are disordered. Positions 230-239 (PRNDAGDNRG) are enriched in basic and acidic residues.

This sequence belongs to the universal ribosomal protein uS3 family. In terms of assembly, part of the 30S ribosomal subunit. Forms a tight complex with proteins S10 and S14.

Binds the lower part of the 30S subunit head. Binds mRNA in the 70S ribosome, positioning it for translation. The protein is Small ribosomal subunit protein uS3 of Aromatoleum aromaticum (strain DSM 19018 / LMG 30748 / EbN1) (Azoarcus sp. (strain EbN1)).